We begin with the raw amino-acid sequence, 267 residues long: MSNISSVAPPPPPPPMIVTPSTPATTKERPVGDNITTDECTWACEYPEVQKGCYLSRVCQYTPPKHCQYYSVNSIVQVGPTCGLVALSMLLGGSPTADDLLKDAIDQEYTLNGELFSAQYLFELTRKHMPGPAACQLHVGPLDCKKVKELLKAGGCLLVPYDADVNHAPCVKNGHRAHWALIVGYLVDTQDRFYVLARHGKSRNLAVWPLDTLSQSNENLKEFAQPKGYPDDEFLLPPGGIGGSLGLNERCILVNGLPKQVIHVRWS.

A disordered region spans residues 1–32 (MSNISSVAPPPPPPPMIVTPSTPATTKERPVG). Residues 8–17 (APPPPPPPMI) are compositionally biased toward pro residues. The tract at residues 74–188 (SIVQVGPTCG…WALIVGYLVD (115 aa)) is peptidase C39-like. Residue Cys-82 is part of the active site.

Belongs to the ACTMAP family.

It catalyses the reaction N-terminal N(alpha)-acetyl-L-cysteinyl-L-aspartyl-[protein] + H2O = N-terminal L-aspartyl-[protein] + N-acetyl-L-cysteine. Its function is as follows. Actin maturation protease that specifically mediates the cleavage of immature acetylated N-terminal actin, thereby contributing to actin maturation. The polypeptide is Actin maturation protease (Drosophila melanogaster (Fruit fly)).